We begin with the raw amino-acid sequence, 616 residues long: Ectonucleoside triphosphate diphosphohydrolase 4 (616 aa).

Over 1-33 (MGRIGISCLFPASWHFSISPVGCPRILNTNLRQ) the chain is Cytoplasmic. The helical transmembrane segment at 34 to 54 (IMVISVLAAAVSLLYFSVVII) threads the bilayer. Residues 55 to 559 (RNKYGRLTRD…ASHTHWRGVS (505 aa)) are Lumenal-facing. E222 functions as the Proton acceptor in the catalytic mechanism. C368 and C395 form a disulfide bridge. N404 and N407 each carry an N-linked (GlcNAc...) asparagine glycan. A disulfide bridge links C461 with C490. Residues 560–580 (FVYNHYLFSGCFLVVLLAILL) traverse the membrane as a helical segment. The Cytoplasmic portion of the chain corresponds to 581–616 (YLLRLRRIHRRTPRSSSAAALWMEEGLPAQNAPGTL).

The protein belongs to the GDA1/CD39 NTPase family. Requires Ca(2+) as cofactor. Mg(2+) is required as a cofactor. As to expression, ubiquitous. Highest expression in testis and lowest in bladder.

The protein localises to the cytoplasmic vesicle. The protein resides in the autophagosome membrane. It localises to the lysosome membrane. It is found in the golgi apparatus membrane. The enzyme catalyses a ribonucleoside 5'-diphosphate + H2O = a ribonucleoside 5'-phosphate + phosphate + H(+). It carries out the reaction a ribonucleoside 5'-triphosphate + H2O = a ribonucleoside 5'-diphosphate + phosphate + H(+). It catalyses the reaction UDP + H2O = UMP + phosphate + H(+). The catalysed reaction is UTP + H2O = UDP + phosphate + H(+). The enzyme catalyses CTP + H2O = CDP + phosphate + H(+). It carries out the reaction GDP + H2O = GMP + phosphate + H(+). It catalyses the reaction GTP + H2O = GDP + phosphate + H(+). The catalysed reaction is 5-methyl-UTP + H2O = 5-methyl-UDP + phosphate + H(+). Catalyzes the hydrolysis of nucleoside triphosphates and diphosphates in a calcium- or magnesium-dependent manner, with a preference for pyrimidines. Preferentially hydrolyzes UTP and TTP. AMP, ADP, ATP and UMP are not substrates. Preferentially activated by Ca(2+) over Mg(2+). Functionally, has a broad substrate specificity with the ability of cleaving all nucleotide di- and triphosphates with the exception of adenosine di- and triphosphate (ADP and ATP). Preferentially hydrolyzes CTP, UDP, CDP, GTP and GDP. Can use either Ca(2+) or Mg(2+) equally. This chain is Ectonucleoside triphosphate diphosphohydrolase 4, found in Homo sapiens (Human).